Consider the following 103-residue polypeptide: MYAVFQSGGKQHRVSEGQVVRLEKLELATGETVEFDSVLMVVNGEDVKIGAPVVSGAKVVAEVVAQGRGDKVKIVKFRRRKHSRKQQGHRQWFTEVKITGIQA.

The protein belongs to the bacterial ribosomal protein bL21 family. In terms of assembly, part of the 50S ribosomal subunit. Contacts protein L20.

Its function is as follows. This protein binds to 23S rRNA in the presence of protein L20. The chain is Large ribosomal subunit protein bL21 from Actinobacillus succinogenes (strain ATCC 55618 / DSM 22257 / CCUG 43843 / 130Z).